Reading from the N-terminus, the 418-residue chain is Queuine tRNA-ribosyltransferase accessory subunit 2 (418 aa).

Cysteine 325, cysteine 327, cysteine 330, and histidine 356 together coordinate Zn(2+).

It belongs to the queuine tRNA-ribosyltransferase family. QTRT2 subfamily. In terms of assembly, heterodimer of a catalytic subunit and an accessory subunit. Requires Zn(2+) as cofactor.

The protein localises to the cytoplasm. Its function is as follows. Non-catalytic subunit of the queuine tRNA-ribosyltransferase (TGT) that catalyzes the base-exchange of a guanine (G) residue with queuine (Q) at position 34 (anticodon wobble position) in tRNAs with GU(N) anticodons (tRNA-Asp, -Asn, -His and -Tyr), resulting in the hypermodified nucleoside queuosine (7-(((4,5-cis-dihydroxy-2-cyclopenten-1-yl)amino)methyl)-7-deazaguanosine). In Drosophila melanogaster (Fruit fly), this protein is Queuine tRNA-ribosyltransferase accessory subunit 2.